Reading from the N-terminus, the 1237-residue chain is Tyrosine-protein kinase sid-3 (1237 aa).

The 263-residue stretch at 107-369 folds into the Protein kinase domain; sequence IKLYELIGEG…REDLVAAMFL (263 aa). ATP is bound by residues 113–121 and lysine 139; that span reads IGEGSFAVV. The active-site Proton acceptor is the aspartate 230. The region spanning 366 to 426 is the SH3 domain; it reads AMFLDAVARE…PRSVVFAQTN (61 aa). Disordered stretches follow at residues 683-704, 741-802, 826-919, 940-986, 999-1018, and 1134-1156; these read NQGS…GIQN, PPAP…APVQ, IQPQ…EERR, SNST…SEPI, SATT…PSPP, and QQRQ…SAAS. Composition is skewed to polar residues over residues 749–766, 778–791, and 847–863; these read QPVS…TLQK, KRPT…SNGF, and SAPT…SQAS. Composition is skewed to low complexity over residues 881 to 910 and 940 to 961; these read TPIT…TSTT and SNST…PSTA. Residues 1138–1156 are compositionally biased toward low complexity; the sequence is AGSSSRAVPPASASTSAAS.

It belongs to the protein kinase superfamily. Tyr protein kinase family. SYK/ZAP-70 subfamily. In terms of tissue distribution, ubiquitously present in all tissues tested. Expressed in the somatic cells of gut, pharynx, body wall muscle, neurons, skin and excretory canal cells.

It is found in the cytoplasm. It carries out the reaction L-tyrosyl-[protein] + ATP = O-phospho-L-tyrosyl-[protein] + ADP + H(+). Tyrosine-protein kinase which plays a role in RNA-mediated gene silencing by mediating import of double-stranded RNA (dsRNA) into cells. Not required for import of ingested dsRNA into intestinal cells but involved in subsequent export from intestinal cells to internal tissues. This is Tyrosine-protein kinase sid-3 (sid-3) from Caenorhabditis elegans.